The sequence spans 1033 residues: Immunoglobulin superfamily member 2 (1033 aa).

Positions 1–20 (MACILCVASLFLSLTKFSIG) are cleaved as a signal peptide. Residues 21–970 (QREVKIQEGP…VSSLICSSGP (950 aa)) are Extracellular-facing. 7 Ig-like C2-type domains span residues 22–141 (REVK…TNLT), 144–266 (PDTL…TLIT), 279–388 (PAAR…TQMG), 408–529 (PAAR…QKIS), 539–657 (LRVN…ARVS), 670–797 (PESK…RKTS), and 806–941 (PTGS…KWIN). The cysteines at positions 43 and 121 are disulfide-linked. An N-linked (GlcNAc...) asparagine glycan is attached at N139. A disulfide bridge connects residues C168 and C249. Positions 253-255 (EWI) match the EWI motif motif. 3 disulfide bridges follow: C304–C377, C432–C509, and C560–C638. N677 carries an N-linked (GlcNAc...) asparagine glycan. Disulfide bonds link C695–C776 and C832–C925. Residues 971-991 (LLHFLIVCPFVMLLLLATSFL) traverse the membrane as a helical segment. The Cytoplasmic portion of the chain corresponds to 992–1033 (CLYRKARKLSQLSLSAKKEKALWVGMRKTSLQKEAGEESGHY).

Post-translationally, N-glycosylated.

It localises to the membrane. Plays a role as inhibitor of T-cells proliferation induced by CD3. Inhibits expression of IL2RA on activated T-cells and secretion of IL2. Inhibits tyrosine kinases that are required for IL2 production and cellular proliferation. Inhibits phospholipase C-gamma-1/PLCG1 phosphorylation and subsequent CD3-induced changes in intracellular free calcium. Prevents nuclear translocation of nuclear factor of activated T-cell to the nucleus. Plays a role in the inhibition of T-cell proliferation via IL10 secretion by cutaneous dendritic cells. In Mus musculus (Mouse), this protein is Immunoglobulin superfamily member 2 (Cd101).